Here is a 663-residue protein sequence, read N- to C-terminus: 4-hydroxy-3-methylbut-2-en-1-yl diphosphate synthase (flavodoxin) (663 aa).

Cysteine 568, cysteine 571, cysteine 602, and glutamate 609 together coordinate [4Fe-4S] cluster.

Belongs to the IspG family. [4Fe-4S] cluster is required as a cofactor.

It carries out the reaction (2E)-4-hydroxy-3-methylbut-2-enyl diphosphate + oxidized [flavodoxin] + H2O + 2 H(+) = 2-C-methyl-D-erythritol 2,4-cyclic diphosphate + reduced [flavodoxin]. It functions in the pathway isoprenoid biosynthesis; isopentenyl diphosphate biosynthesis via DXP pathway; isopentenyl diphosphate from 1-deoxy-D-xylulose 5-phosphate: step 5/6. Functionally, converts 2C-methyl-D-erythritol 2,4-cyclodiphosphate (ME-2,4cPP) into 1-hydroxy-2-methyl-2-(E)-butenyl 4-diphosphate. The protein is 4-hydroxy-3-methylbut-2-en-1-yl diphosphate synthase (flavodoxin) of Leptospira borgpetersenii serovar Hardjo-bovis (strain JB197).